A 69-amino-acid polypeptide reads, in one-letter code: MPKQIHEIKDFLLTARRKDARSVKIKRSKDIVKFKVRCSRYLYTLCVFDQEKADKLKQSLPPGLSVQDL.

The protein belongs to the eukaryotic ribosomal protein eL38 family.

The chain is Large ribosomal subunit protein eL38z/eL38y (RPL38A) from Arabidopsis thaliana (Mouse-ear cress).